A 756-amino-acid polypeptide reads, in one-letter code: Cilium assembly protein DZIP1L (756 aa).

Positions 1-20 (MLGQFSPGEPYTTSLSSTPP) are disordered. The segment covering 10–19 (PYTTSLSSTP) has biased composition (low complexity). Residues 108–158 (DFLSSQLAGLEERLQAATSLVQQGEGQRAELEKSLQETKQENRRRKQLIAT) adopt a coiled-coil conformation. A C2H2-type zinc finger spans residues 171–194 (HKCQFCEKSFVNYSYLQAHVQRRH). 4 stretches are compositionally biased toward basic and acidic residues: residues 193–202 (RHPEVTDAEK), 237–262 (NLRR…ERWK), 319–335 (DPEK…LRER), and 344–365 (RRKF…KSEN). 6 disordered regions span residues 193 to 212 (RHPE…EEME), 233 to 262 (QQAD…ERWK), 310 to 365 (NNAS…KSEN), 409 to 466 (KIKK…MRES), 531 to 626 (VKSL…AYIT), and 693 to 756 (IKTP…GTSA). Coiled coils occupy residues 196-283 (EVTD…FLQE) and 321-416 (EKEM…LSAT). Polar residues predominate over residues 534 to 558 (LQKSSGKPTPNTLKQRGKKTSTPLN). A compositionally biased stretch (basic and acidic residues) spans 560-578 (KSLRFRQDSKASDRREKSQ). Positions 586–598 (TPTPRSKAPPPNQ) are enriched in pro residues.

Belongs to the DZIP C2H2-type zinc-finger protein family.

The protein resides in the cytoplasm. The protein localises to the cytoskeleton. It is found in the cilium basal body. It localises to the microtubule organizing center. Its subcellular location is the centrosome. The protein resides in the centriole. In terms of biological role, involved in primary cilium formation. Probably acts as a transition zone protein required for localization of PKD1/PC1 and PKD2/PC2 to the ciliary membrane. The polypeptide is Cilium assembly protein DZIP1L (dzip1l) (Danio rerio (Zebrafish)).